The primary structure comprises 319 residues: Acetyl-coenzyme A carboxylase carboxyl transferase subunit alpha (319 aa).

A CoA carboxyltransferase C-terminal domain is found at 32–293 (NVETEVRALR…KAVLLNELDA (262 aa)).

This sequence belongs to the AccA family. As to quaternary structure, acetyl-CoA carboxylase is a heterohexamer composed of biotin carboxyl carrier protein (AccB), biotin carboxylase (AccC) and two subunits each of ACCase subunit alpha (AccA) and ACCase subunit beta (AccD).

It localises to the cytoplasm. It catalyses the reaction N(6)-carboxybiotinyl-L-lysyl-[protein] + acetyl-CoA = N(6)-biotinyl-L-lysyl-[protein] + malonyl-CoA. Its pathway is lipid metabolism; malonyl-CoA biosynthesis; malonyl-CoA from acetyl-CoA: step 1/1. Component of the acetyl coenzyme A carboxylase (ACC) complex. First, biotin carboxylase catalyzes the carboxylation of biotin on its carrier protein (BCCP) and then the CO(2) group is transferred by the carboxyltransferase to acetyl-CoA to form malonyl-CoA. This Xanthomonas axonopodis pv. citri (strain 306) protein is Acetyl-coenzyme A carboxylase carboxyl transferase subunit alpha.